Here is a 179-residue protein sequence, read N- to C-terminus: Large ribosomal subunit protein uL6 (179 aa).

It belongs to the universal ribosomal protein uL6 family. As to quaternary structure, part of the 50S ribosomal subunit.

This protein binds to the 23S rRNA, and is important in its secondary structure. It is located near the subunit interface in the base of the L7/L12 stalk, and near the tRNA binding site of the peptidyltransferase center. In Trichlorobacter lovleyi (strain ATCC BAA-1151 / DSM 17278 / SZ) (Geobacter lovleyi), this protein is Large ribosomal subunit protein uL6.